The sequence spans 432 residues: D-amino acid dehydrogenase (432 aa).

3 to 17 is an FAD binding site; sequence VLVLGSGVIGTTTAY.

This sequence belongs to the DadA oxidoreductase family. Requires FAD as cofactor.

The enzyme catalyses a D-alpha-amino acid + A + H2O = a 2-oxocarboxylate + AH2 + NH4(+). Its pathway is amino-acid degradation; D-alanine degradation; NH(3) and pyruvate from D-alanine: step 1/1. Functionally, oxidative deamination of D-amino acids. This is D-amino acid dehydrogenase from Azotobacter vinelandii (strain DJ / ATCC BAA-1303).